The sequence spans 156 residues: Bacterial ferritin (156 aa).

The 146-residue stretch at 1–146 folds into the Ferritin-like diiron domain; sequence MKGKPAVLAQ…KQLGLIEKIG (146 aa). Fe cation is bound by residues Glu-18, Glu-51, His-54, Glu-94, Glu-128, and His-131.

Belongs to the bacterioferritin family. As to quaternary structure, the bacterioferritin (BFR) complex is formed of 24 subunits (BfrA and BfrB) of unknown stoichiometry. The BFR is arranged as 12 dimers that are packed together to form an approximately spherical molecule with a central cavity, in which large amounts of iron can be deposited.

It localises to the cytoplasm. It carries out the reaction 4 Fe(2+) + O2 + 4 H(+) = 4 Fe(3+) + 2 H2O. The catalysed reaction is Fe(2+)(in) = Fe(2+)(out). In terms of biological role, part of the iron-storage bacterioferritin (BFR) complex which stores about 50% of intracellular iron. Iron-storage protein, whose ferroxidase center binds Fe(2+), oxidizes it using dioxygen to Fe(3+), and participates in the subsequent Fe(3+) oxide mineral core formation within the central cavity of the BFR protein shell. BFR rapidly binds iron in labeling experiments in vivo during iron-limiting conditions. The polypeptide is Bacterial ferritin (Synechocystis sp. (strain ATCC 27184 / PCC 6803 / Kazusa)).